The sequence spans 576 residues: G protein-coupled receptor kinase 6 (576 aa).

An N-terminal region spans residues 1 to 185 (MELENIVANT…LERQPVTKNT (185 aa)). Residues 53 to 171 (YHSLCERQPI…LDSIYFNRFL (119 aa)) form the RGS domain. Residues 186–448 (FRQYRVLGKG…AREVKEHPLF (263 aa)) form the Protein kinase domain. ATP is bound by residues 192 to 200 (LGKGGFGEV), Lys215, and 264 to 270 (TLMNGGD). Asp311 acts as the Proton acceptor in catalysis. Position 315–318 (315–318 (ENIL)) interacts with ATP. The AGC-kinase C-terminal domain maps to 449-514 (KKLNFKRLGA…GSVSIPWQNE (66 aa)). Ser484 carries the phosphoserine modification. Thr485 is modified (phosphothreonine). 3 S-palmitoyl cysteine lipidation sites follow: Cys561, Cys562, and Cys565. Residues Ser566 and Ser568 each carry the phosphoserine modification.

This sequence belongs to the protein kinase superfamily. AGC Ser/Thr protein kinase family. GPRK subfamily. In terms of assembly, interacts with GIT1. In terms of tissue distribution, expressed in the brain in striatal neurons.

Its subcellular location is the membrane. The enzyme catalyses [G-protein-coupled receptor] + ATP = [G-protein-coupled receptor]-phosphate + ADP + H(+). In terms of biological role, specifically phosphorylates the activated forms of G protein-coupled receptors. Such receptor phosphorylation initiates beta-arrestin-mediated receptor desensitization, internalization, and signaling events leading to their desensitization. Seems to be involved in the desensitization of D2-like dopamine receptors in striatum and chemokine receptor CXCR4 which is critical for CXCL12-induced cell chemotaxis. Phosphorylates rhodopsin (RHO) (in vitro) and a non G-protein-coupled receptor, LRP6 during Wnt signaling (in vitro). In Mus musculus (Mouse), this protein is G protein-coupled receptor kinase 6 (Grk6).